The sequence spans 1147 residues: Sterol regulatory element-binding protein 1 (1147 aa).

Residues 1 to 60 (MDEPPFSEAALEQALGEPCDLDAALLTDIEDMLQLINNQDSDFPGLFDPPYAGSGAGGTD) are transcriptional activation (acidic). Topologically, residues 1–487 (MDEPPFSEAA…HSRGMLDRSR (487 aa)) are cytoplasmic. Positions 27–35 (TDIEDMLQL) match the 9aaTAD motif. Residues 39–193 (QDSDFPGLFD…PLPGLPLASP (155 aa)) form a disordered region. Low complexity-rich tracts occupy residues 62-71 (ASPDTSSPGS) and 78-95 (TLSS…AAPS). The segment covering 96–105 (PLSPPQPAPT) has biased composition (pro residues). Phosphoserine is present on residues Ser98 and Ser117. Positions 170–190 (GGFSTGSPPGNTQQPLPGLPL) are enriched in low complexity. The interval 234-497 (QQVPVLLQPH…LALCTLVFLC (264 aa)) is interaction with LMNA. The region spanning 323-373 (EKRTAHNAIEKRYRSSINDKIIELKDLVVGTEAKLNKSAVLRKAIDYIRFL) is the bHLH domain. Phosphoserine; by SIK1 occurs at positions 337 and 338. A leucine-zipper region spans residues 373–394 (LQHSNQKLKQENLSLRTAVHKS). Phosphoserine; by AMPK is present on Ser396. Position 402 is a phosphoserine; by SIK1 (Ser402). The segment at 421-479 (VEDTLTPPPSDAGSPFQSSPLSLGSRGSGSGGSGSDSEPDSPVFEDSKAKPEQRPSLHS) is disordered. Ser457 is subject to Phosphoserine. Basic and acidic residues predominate over residues 465–479 (EDSKAKPEQRPSLHS). Residues 488-508 (LALCTLVFLCLSCNPLASLLG) traverse the membrane as a helical segment. Topologically, residues 509 to 547 (ARGLPSPSDTTSVYHSPGRNVLGTESRDGPGWAQWLLPP) are lumenal. The chain crosses the membrane as a helical span at residues 548 to 568 (VVWLLNGLLVLVSLVLLFVYG). The Cytoplasmic portion of the chain corresponds to 569–1147 (EPVTRPHSGP…LGGGTTVTSS (579 aa)). Ser1060 carries the post-translational modification Phosphoserine.

Belongs to the SREBP family. In terms of assembly, forms a tight complex with SCAP, the SCAP-SREBP complex, in the endoplasmic reticulum membrane and the Golgi apparatus. Interacts with PAQR3; the interaction anchors the SCAP-SREBP complex to the Golgi apparatus in low cholesterol conditions. As to quaternary structure, efficient DNA binding of the soluble transcription factor fragment requires dimerization with another bHLH protein. Interacts with CEBPA, the interaction produces a transcriptional synergy. Interacts with LMNA. Post-translationally, processed in the Golgi apparatus, releasing the protein from the membrane. At low cholesterol the SCAP-SREBP complex is recruited into COPII vesicles for export from the endoplasmic reticulum. In the Golgi, complex SREBPs are cleaved sequentially by site-1 (MBTPS1, S1P) and site-2 (MBTPS2, S2P) protease. The first cleavage by site-1 protease occurs within the luminal loop, the second cleavage by site-2 protease occurs within the first transmembrane domain, releasing the transcription factor from the Golgi membrane. In terms of processing, phosphorylated by AMPK, leading to suppress protein processing and nuclear translocation, and repress target gene expression. Phosphorylation at Ser-402 by SIK1 represses activity possibly by inhibiting DNA-binding. SCAP-free SREBF1 is ubiquitinated by the BCR(ARMC5) complex, leading to its degradation. Post-translationally, ubiquitinated; the nuclear form has a rapid turnover and is rapidly ubiquitinated and degraded by the proteasome in the nucleus. In terms of tissue distribution, expressed in a wide variety of tissues, most abundant in liver and adrenal gland. In fetal tissues lung and liver shows highest expression. As to expression, predominates in hepatoma cell lines. Also expressed in kidney, brain, white fat, and muscle. Predominantly expressed in liver and adipose tissues. Also expressed in kidney, brain, white fat, and muscle.

It localises to the endoplasmic reticulum membrane. Its subcellular location is the golgi apparatus membrane. It is found in the cytoplasmic vesicle. The protein localises to the COPII-coated vesicle membrane. The protein resides in the nucleus. With respect to regulation, activation by cleavage is down-regulated upon activation of SIRT3-dependent PRKAA1/AMPK-alpha signaling cascade which leads to inhibition of ATP-consuming lipogenesis to restore cellular energy balance. Its function is as follows. Precursor of the transcription factor form (Processed sterol regulatory element-binding protein 1), which is embedded in the endoplasmic reticulum membrane. Low sterol concentrations promote processing of this form, releasing the transcription factor form that translocates into the nucleus and activates transcription of genes involved in cholesterol biosynthesis and lipid homeostasis. In terms of biological role, key transcription factor that regulates expression of genes involved in cholesterol biosynthesis and lipid homeostasis. Binds to the sterol regulatory element 1 (SRE-1) (5'-ATCACCCCAC-3'). Has dual sequence specificity binding to both an E-box motif (5'-ATCACGTGA-3') and to SRE-1 (5'-ATCACCCCAC-3'). Regulates the promoters of genes involved in cholesterol biosynthesis and the LDL receptor (LDLR) pathway of sterol regulation. Isoform expressed only in select tissues, which has higher transcriptional activity compared to SREBP-1C. Able to stimulate both lipogenic and cholesterogenic gene expression. Has a role in the nutritional regulation of fatty acids and triglycerides in lipogenic organs such as the liver. Required for innate immune response in macrophages by regulating lipid metabolism. Functionally, predominant isoform expressed in most tissues, which has weaker transcriptional activity compared to isoform SREBP-1A. Primarily controls expression of lipogenic gene. Strongly activates global lipid synthesis in rapidly growing cells. Its function is as follows. The absence of Golgi proteolytic processing requirement makes this isoform constitutively active in transactivation of lipogenic gene promoters. The protein is Sterol regulatory element-binding protein 1 of Homo sapiens (Human).